The following is a 179-amino-acid chain: Large ribosomal subunit protein bL9 (179 aa).

A disordered region spans residues 156–179 (PEGAPVPVAEEPAAEAEQAEVAAE). Low complexity predominate over residues 157-166 (EGAPVPVAEE). Over residues 167 to 179 (PAAEAEQAEVAAE) the composition is skewed to acidic residues.

It belongs to the bacterial ribosomal protein bL9 family.

In terms of biological role, binds to the 23S rRNA. The protein is Large ribosomal subunit protein bL9 of Porphyromonas gingivalis (strain ATCC 33277 / DSM 20709 / CIP 103683 / JCM 12257 / NCTC 11834 / 2561).